Consider the following 161-residue polypeptide: MKRKVLAMLVPALLVAGAANAAEVYNKDGNKLDLYGKVVGLHYFSDDSGSDGDMSYARIGFKGETQIADQFTGYGQWEFNIGANGPESDKGNTATRLAFAGLGFGQNGTFDYGRNYGVVYDVEAWTDMLPEFGGDTYAGADNFMNGRANGVATYRNNGFFG.

The first 21 residues, 1 to 21 (MKRKVLAMLVPALLVAGAANA), serve as a signal peptide directing secretion.

Belongs to the Gram-negative porin family.

The protein localises to the cell outer membrane. In Escherichia coli (strain K12), this protein is Putative outer membrane protein YedS (yedS).